A 382-amino-acid polypeptide reads, in one-letter code: 1-deoxy-D-xylulose 5-phosphate reductoisomerase (382 aa).

6 residues coordinate NADPH: Thr-10, Gly-11, Ser-12, Ile-13, Gly-36, and Asn-122. Lys-123 contacts 1-deoxy-D-xylulose 5-phosphate. Glu-124 contacts NADPH. Position 148 (Asp-148) interacts with Mn(2+). Residues Ser-149, Glu-150, Ser-174, and His-197 each contribute to the 1-deoxy-D-xylulose 5-phosphate site. Glu-150 contacts Mn(2+). Position 203 (Gly-203) interacts with NADPH. 1-deoxy-D-xylulose 5-phosphate is bound by residues Ser-210, Asn-215, Lys-216, and Glu-219. Glu-219 lines the Mn(2+) pocket.

The protein belongs to the DXR family. Mg(2+) serves as cofactor. It depends on Mn(2+) as a cofactor.

The enzyme catalyses 2-C-methyl-D-erythritol 4-phosphate + NADP(+) = 1-deoxy-D-xylulose 5-phosphate + NADPH + H(+). It participates in isoprenoid biosynthesis; isopentenyl diphosphate biosynthesis via DXP pathway; isopentenyl diphosphate from 1-deoxy-D-xylulose 5-phosphate: step 1/6. In terms of biological role, catalyzes the NADPH-dependent rearrangement and reduction of 1-deoxy-D-xylulose-5-phosphate (DXP) to 2-C-methyl-D-erythritol 4-phosphate (MEP). The protein is 1-deoxy-D-xylulose 5-phosphate reductoisomerase of Chlorobium chlorochromatii (strain CaD3).